Reading from the N-terminus, the 306-residue chain is Choline-binding protein (306 aa).

A signal peptide spans 1–22 (MKRKYLKLMIGLALAATLTLSG). Cys23 is lipidated: N-palmitoyl cysteine. The S-diacylglycerol cysteine moiety is linked to residue Cys23.

The protein belongs to the OsmX family.

It localises to the cell membrane. In terms of biological role, member of a high affinity multicomponent binding-protein-dependent transport system for choline. This Bacillus subtilis (strain 168) protein is Choline-binding protein (opuBC).